The primary structure comprises 538 residues: Succinyl-CoA:acetate CoA-transferase (538 aa).

A CoA-binding site is contributed by 305 to 309 (GVGSV). Glu330 functions as the 5-glutamyl coenzyme A thioester intermediate in the catalytic mechanism. CoA-binding residues include Asn420 and Gly424.

Belongs to the acetyl-CoA hydrolase/transferase family.

The enzyme catalyses succinyl-CoA + acetate = succinate + acetyl-CoA. Its function is as follows. Forms succinyl-CoA from succinate and acetyl-CoA. The sequence is that of Succinyl-CoA:acetate CoA-transferase from Clostridium kluyveri (strain ATCC 8527 / DSM 555 / NBRC 12016 / NCIMB 10680 / K1).